The primary structure comprises 447 residues: Histidine--tRNA ligase (447 aa).

The protein belongs to the class-II aminoacyl-tRNA synthetase family. As to quaternary structure, homodimer.

It is found in the cytoplasm. The catalysed reaction is tRNA(His) + L-histidine + ATP = L-histidyl-tRNA(His) + AMP + diphosphate + H(+). The protein is Histidine--tRNA ligase (hisS) of Synechocystis sp. (strain ATCC 27184 / PCC 6803 / Kazusa).